The following is an 88-amino-acid chain: Cell division topological specificity factor (88 aa).

This sequence belongs to the MinE family.

Functionally, prevents the cell division inhibition by proteins MinC and MinD at internal division sites while permitting inhibition at polar sites. This ensures cell division at the proper site by restricting the formation of a division septum at the midpoint of the long axis of the cell. This is Cell division topological specificity factor from Acidovorax ebreus (strain TPSY) (Diaphorobacter sp. (strain TPSY)).